The following is a 310-amino-acid chain: Nucleotide-binding protein Mmc1_3333 (310 aa).

An ATP-binding site is contributed by 19 to 26; it reads GLSGAGKS.

It belongs to the RapZ-like family.

Functionally, displays ATPase and GTPase activities. This is Nucleotide-binding protein Mmc1_3333 from Magnetococcus marinus (strain ATCC BAA-1437 / JCM 17883 / MC-1).